Consider the following 461-residue polypeptide: Photosystem II CP43 reaction center protein (461 aa).

Positions 1–2 (ME) are excised as a propeptide. Position 3 is an N-acetylthreonine (Thr3). A Phosphothreonine modification is found at Thr3. 5 helical membrane-spanning segments follow: residues 57–81 (LFEV…PHLA), 122–143 (LIGP…KDKN), 166–188 (KAMY…RIIT), 243–263 (TPWP…LSYS), and 279–300 (WFNN…ASQS). A [CaMn4O5] cluster-binding site is contributed by Glu355. A helical membrane pass occupies residues 435–459 (RARAAAAGFEKGIDRLDEPVLSMRP).

Belongs to the PsbB/PsbC family. PsbC subfamily. As to quaternary structure, PSII is composed of 1 copy each of membrane proteins PsbA, PsbB, PsbC, PsbD, PsbE, PsbF, PsbH, PsbI, PsbJ, PsbK, PsbL, PsbM, PsbT, PsbX, PsbY, PsbZ, Psb30/Ycf12, at least 3 peripheral proteins of the oxygen-evolving complex and a large number of cofactors. It forms dimeric complexes. Requires Binds multiple chlorophylls and provides some of the ligands for the Ca-4Mn-5O cluster of the oxygen-evolving complex. It may also provide a ligand for a Cl- that is required for oxygen evolution. PSII binds additional chlorophylls, carotenoids and specific lipids. as cofactor.

The protein resides in the plastid. It localises to the chloroplast thylakoid membrane. Its function is as follows. One of the components of the core complex of photosystem II (PSII). It binds chlorophyll and helps catalyze the primary light-induced photochemical processes of PSII. PSII is a light-driven water:plastoquinone oxidoreductase, using light energy to abstract electrons from H(2)O, generating O(2) and a proton gradient subsequently used for ATP formation. The sequence is that of Photosystem II CP43 reaction center protein from Tetradesmus obliquus (Green alga).